Consider the following 476-residue polypeptide: Ribulose bisphosphate carboxylase large chain (476 aa).

Residues 1–2 constitute a propeptide that is removed on maturation; that stretch reads MS. P3 bears the N-acetylproline mark. K14 carries the post-translational modification N6,N6,N6-trimethyllysine. Substrate contacts are provided by N123 and T173. K175 functions as the Proton acceptor in the catalytic mechanism. K177 provides a ligand contact to substrate. Residues K201, D203, and E204 each contribute to the Mg(2+) site. K201 carries the N6-carboxylysine modification. The active-site Proton acceptor is the H294. R295, H327, and S379 together coordinate substrate.

This sequence belongs to the RuBisCO large chain family. Type I subfamily. In terms of assembly, heterohexadecamer of 8 large chains and 8 small chains; disulfide-linked. The disulfide link is formed within the large subunit homodimers. Mg(2+) is required as a cofactor. Post-translationally, the disulfide bond which can form in the large chain dimeric partners within the hexadecamer appears to be associated with oxidative stress and protein turnover.

Its subcellular location is the plastid. The protein localises to the chloroplast. The enzyme catalyses 2 (2R)-3-phosphoglycerate + 2 H(+) = D-ribulose 1,5-bisphosphate + CO2 + H2O. It carries out the reaction D-ribulose 1,5-bisphosphate + O2 = 2-phosphoglycolate + (2R)-3-phosphoglycerate + 2 H(+). RuBisCO catalyzes two reactions: the carboxylation of D-ribulose 1,5-bisphosphate, the primary event in carbon dioxide fixation, as well as the oxidative fragmentation of the pentose substrate in the photorespiration process. Both reactions occur simultaneously and in competition at the same active site. In Liriodendron tulipifera (Tuliptree), this protein is Ribulose bisphosphate carboxylase large chain.